A 603-amino-acid chain; its full sequence is Elongation factor 4 (603 aa).

In terms of domain architecture, tr-type G spans 7 to 189 (SHIRNFSIIA…SIVHLVPPPR (183 aa)). GTP-binding positions include 19 to 24 (DHGKST) and 136 to 139 (NKID).

It belongs to the TRAFAC class translation factor GTPase superfamily. Classic translation factor GTPase family. LepA subfamily.

Its subcellular location is the cell inner membrane. It carries out the reaction GTP + H2O = GDP + phosphate + H(+). Functionally, required for accurate and efficient protein synthesis under certain stress conditions. May act as a fidelity factor of the translation reaction, by catalyzing a one-codon backward translocation of tRNAs on improperly translocated ribosomes. Back-translocation proceeds from a post-translocation (POST) complex to a pre-translocation (PRE) complex, thus giving elongation factor G a second chance to translocate the tRNAs correctly. Binds to ribosomes in a GTP-dependent manner. This is Elongation factor 4 from Thermosynechococcus vestitus (strain NIES-2133 / IAM M-273 / BP-1).